The sequence spans 70 residues: Guanine nucleotide-binding protein G(I)/G(S)/G(O) subunit gamma-8 (70 aa).

Cysteine 67 is subject to Cysteine methyl ester. The S-geranylgeranyl cysteine moiety is linked to residue cysteine 67. Positions 68–70 are cleaved as a propeptide — removed in mature form; that stretch reads VLL.

The protein belongs to the G protein gamma family. In terms of assembly, g proteins are composed of 3 units, alpha, beta and gamma.

It is found in the cell membrane. Its function is as follows. Guanine nucleotide-binding proteins (G proteins) are involved as a modulator or transducer in various transmembrane signaling systems. The beta and gamma chains are required for the GTPase activity, for replacement of GDP by GTP, and for G protein-effector interaction. This Homo sapiens (Human) protein is Guanine nucleotide-binding protein G(I)/G(S)/G(O) subunit gamma-8 (GNG8).